The chain runs to 248 residues: Killer cell lectin-like receptor subfamily I member 1 (248 aa).

The Cytoplasmic portion of the chain corresponds to 1 to 80; the sequence is MLHSKRREYT…RQGPKSTVWR (80 aa). 2 short sequence motifs (ITIM motif) span residues 16 to 21 and 47 to 52; these read VTYTEL and LKYGEL. The chain crosses the membrane as a helical; Signal-anchor for type II membrane protein span at residues 81–101; the sequence is VVTGMLGALCVVLMTTTGILL. Topologically, residues 102–248 are extracellular; that stretch reads PKLFSSQEEQ…KKSYICEFNI (147 aa). 3 disulfide bridges follow: C132–C145, C161–C244, and C223–C236. The region spanning 139 to 245 is the C-type lectin domain; that stretch reads FGNNFYCVFK…CSAKKSYICE (107 aa). N197, N214, and N220 each carry an N-linked (GlcNAc...) asparagine glycan.

Heterodimer with KLRE1. Interacts with PTPN6. Expressed in natural killer (NK) cells.

It is found in the cell membrane. Its function is as follows. Lectin-like receptor for natural killer (NK) cells. Heterodimer formation with KLRE1 mediates inhibition of NK cell cytolytic activity. This chain is Killer cell lectin-like receptor subfamily I member 1, found in Mus musculus (Mouse).